A 206-amino-acid polypeptide reads, in one-letter code: MTEQPTNRNDVPRRGLGRDATVASICGLVVALMVGASYAAVPFYNWFCRATGFNGTTQVATAAPIAAPLPRKITVRFDSNVNGLPWKFTPEQTEIEIPIGQVVTVFYTVTNLSAHETTGQAAYNVAPLTVGAYFQKINCFCFTEQTFAAGETREMPVVFYVDPALAADPENDGLNSITLSYTFYPVRAPTPKPVAAGEPDSRKGAL.

Residues 1-22 (MTEQPTNRNDVPRRGLGRDATV) are Cytoplasmic-facing. The helical; Signal-anchor for type II membrane protein transmembrane segment at 23–43 (ASICGLVVALMVGASYAAVPF) threads the bilayer. Residues 44–206 (YNWFCRATGF…GEPDSRKGAL (163 aa)) lie on the Periplasmic side of the membrane.

The protein belongs to the COX11/CtaG family.

Its subcellular location is the cell inner membrane. In terms of biological role, exerts its effect at some terminal stage of cytochrome c oxidase synthesis, probably by being involved in the insertion of the copper B into subunit I. The sequence is that of Cytochrome c oxidase assembly protein CtaG from Rhodopseudomonas palustris (strain BisB18).